A 140-amino-acid polypeptide reads, in one-letter code: Nucleoside diphosphate kinase (140 aa).

6 residues coordinate ATP: lysine 11, phenylalanine 59, arginine 87, threonine 93, arginine 104, and asparagine 114. The active-site Pros-phosphohistidine intermediate is the histidine 117.

The protein belongs to the NDK family. As to quaternary structure, homotetramer. Mg(2+) is required as a cofactor.

The protein localises to the cytoplasm. It catalyses the reaction a 2'-deoxyribonucleoside 5'-diphosphate + ATP = a 2'-deoxyribonucleoside 5'-triphosphate + ADP. The catalysed reaction is a ribonucleoside 5'-diphosphate + ATP = a ribonucleoside 5'-triphosphate + ADP. Its function is as follows. Major role in the synthesis of nucleoside triphosphates other than ATP. The ATP gamma phosphate is transferred to the NDP beta phosphate via a ping-pong mechanism, using a phosphorylated active-site intermediate. The sequence is that of Nucleoside diphosphate kinase from Rhodospirillum rubrum (strain ATCC 11170 / ATH 1.1.1 / DSM 467 / LMG 4362 / NCIMB 8255 / S1).